Reading from the N-terminus, the 242-residue chain is Uridylate kinase (242 aa).

Lys-13–Gly-16 serves as a coordination point for ATP. Residue Gly-55 participates in UMP binding. Gly-56 and Arg-60 together coordinate ATP. UMP-binding positions include Asp-75 and Thr-136–Thr-143. Positions 163, 169, and 172 each coordinate ATP.

This sequence belongs to the UMP kinase family. As to quaternary structure, homohexamer.

It localises to the cytoplasm. The catalysed reaction is UMP + ATP = UDP + ADP. The protein operates within pyrimidine metabolism; CTP biosynthesis via de novo pathway; UDP from UMP (UMPK route): step 1/1. With respect to regulation, inhibited by UTP. Its function is as follows. Catalyzes the reversible phosphorylation of UMP to UDP. In Zymomonas mobilis subsp. mobilis (strain ATCC 31821 / ZM4 / CP4), this protein is Uridylate kinase.